Here is an 83-residue protein sequence, read N- to C-terminus: Cytochrome b559 subunit alpha (83 aa).

Residues 21–35 form a helical membrane-spanning segment; the sequence is VIHSITIPSLFIAGW. Histidine 23 is a heme binding site.

Belongs to the PsbE/PsbF family. As to quaternary structure, heterodimer of an alpha subunit and a beta subunit. PSII is composed of 1 copy each of membrane proteins PsbA, PsbB, PsbC, PsbD, PsbE, PsbF, PsbH, PsbI, PsbJ, PsbK, PsbL, PsbM, PsbT, PsbX, PsbY, PsbZ, Psb30/Ycf12, at least 3 peripheral proteins of the oxygen-evolving complex and a large number of cofactors. It forms dimeric complexes. Heme b serves as cofactor.

The protein resides in the plastid. It is found in the chloroplast thylakoid membrane. In terms of biological role, this b-type cytochrome is tightly associated with the reaction center of photosystem II (PSII). PSII is a light-driven water:plastoquinone oxidoreductase that uses light energy to abstract electrons from H(2)O, generating O(2) and a proton gradient subsequently used for ATP formation. It consists of a core antenna complex that captures photons, and an electron transfer chain that converts photonic excitation into a charge separation. The sequence is that of Cytochrome b559 subunit alpha from Mesembryanthemum crystallinum (Common ice plant).